Here is a 424-residue protein sequence, read N- to C-terminus: Adenylosuccinate synthetase (424 aa).

GTP contacts are provided by residues 12-18 (GDEGKGK) and 40-42 (GHT). The active-site Proton acceptor is aspartate 13. Residues aspartate 13 and glycine 40 each contribute to the Mg(2+) site. Residues 13-16 (DEGK), 38-41 (NAGH), threonine 130, arginine 144, asparagine 220, threonine 235, and arginine 299 contribute to the IMP site. The active-site Proton donor is the histidine 41. Residue 295-301 (VTTGRRR) coordinates substrate. GTP-binding positions include arginine 301, 327–329 (KLD), and 412–414 (GTG).

This sequence belongs to the adenylosuccinate synthetase family. In terms of assembly, homodimer. Requires Mg(2+) as cofactor.

It localises to the cytoplasm. It carries out the reaction IMP + L-aspartate + GTP = N(6)-(1,2-dicarboxyethyl)-AMP + GDP + phosphate + 2 H(+). The protein operates within purine metabolism; AMP biosynthesis via de novo pathway; AMP from IMP: step 1/2. Its function is as follows. Plays an important role in the de novo pathway and in the salvage pathway of purine nucleotide biosynthesis. Catalyzes the first committed step in the biosynthesis of AMP from IMP. In Aspergillus niger (strain ATCC MYA-4892 / CBS 513.88 / FGSC A1513), this protein is Adenylosuccinate synthetase.